The sequence spans 396 residues: Flavohemoprotein (396 aa).

Residues 1–136 (MLDAQTIATV…LANVFIHREA (136 aa)) form the Globin domain. Heme b is bound at residue H85. Active-site charge relay system residues include Y95 and E135. The segment at 147-396 (GGWEGTRPFR…YECFGPHKVL (250 aa)) is reductase. Residues 150–255 (EGTRPFRIVA…AAPAGDFFMN (106 aa)) form the FAD-binding FR-type domain. FAD is bound by residues Y188 and 204–207 (RQYS). 268–273 (GVGQTP) serves as a coordination point for NADP(+). 389 to 392 (CFGP) is a binding site for FAD.

The protein belongs to the globin family. Two-domain flavohemoproteins subfamily. This sequence in the C-terminal section; belongs to the flavoprotein pyridine nucleotide cytochrome reductase family. Heme b serves as cofactor. Requires FAD as cofactor.

The catalysed reaction is 2 nitric oxide + NADPH + 2 O2 = 2 nitrate + NADP(+) + H(+). It catalyses the reaction 2 nitric oxide + NADH + 2 O2 = 2 nitrate + NAD(+) + H(+). Functionally, is involved in NO detoxification in an aerobic process, termed nitric oxide dioxygenase (NOD) reaction that utilizes O(2) and NAD(P)H to convert NO to nitrate, which protects the bacterium from various noxious nitrogen compounds. Therefore, plays a central role in the inducible response to nitrosative stress. In Salmonella typhi, this protein is Flavohemoprotein.